A 527-amino-acid chain; its full sequence is Glutamate--cysteine ligase (527 aa).

Belongs to the glutamate--cysteine ligase type 1 family. Type 1 subfamily.

It carries out the reaction L-cysteine + L-glutamate + ATP = gamma-L-glutamyl-L-cysteine + ADP + phosphate + H(+). It functions in the pathway sulfur metabolism; glutathione biosynthesis; glutathione from L-cysteine and L-glutamate: step 1/2. The chain is Glutamate--cysteine ligase from Pseudomonas aeruginosa (strain LESB58).